The following is a 196-amino-acid chain: Dephospho-CoA kinase (196 aa).

Positions 3 to 196 (RIGLTGNIGC…KVYEELTRDP (194 aa)) constitute a DPCK domain. Position 11–16 (11–16 (GCGKST)) interacts with ATP.

This sequence belongs to the CoaE family.

The protein resides in the cytoplasm. It carries out the reaction 3'-dephospho-CoA + ATP = ADP + CoA + H(+). The protein operates within cofactor biosynthesis; coenzyme A biosynthesis; CoA from (R)-pantothenate: step 5/5. Its function is as follows. Catalyzes the phosphorylation of the 3'-hydroxyl group of dephosphocoenzyme A to form coenzyme A. The sequence is that of Dephospho-CoA kinase from Aquifex aeolicus (strain VF5).